We begin with the raw amino-acid sequence, 225 residues long: RNA chaperone ProQ (225 aa).

Positions 107 to 169 (KARVQAQRAA…VAAKAPREER (63 aa)) are disordered. Residues 109 to 118 (RVQAQRAAQQ) are compositionally biased toward low complexity. Residues 137–146 (RERKPRPQQP) show a composition bias toward basic residues. Basic and acidic residues predominate over residues 147 to 156 (RRKEGAEQRK).

Belongs to the ProQ family.

It localises to the cytoplasm. In terms of biological role, RNA chaperone with significant RNA binding, RNA strand exchange and RNA duplexing activities. May regulate ProP activity through an RNA-based, post-transcriptional mechanism. This is RNA chaperone ProQ from Klebsiella pneumoniae subsp. pneumoniae (strain ATCC 700721 / MGH 78578).